The following is a 130-amino-acid chain: Glycine cleavage system H protein (130 aa).

Positions 24 to 106 (IYSVGITEHA…YADGWLFRIR (83 aa)) constitute a Lipoyl-binding domain. Position 65 is an N6-lipoyllysine (Lys65).

It belongs to the GcvH family. In terms of assembly, the glycine cleavage system is composed of four proteins: P, T, L and H. (R)-lipoate serves as cofactor.

The glycine cleavage system catalyzes the degradation of glycine. The H protein shuttles the methylamine group of glycine from the P protein to the T protein. This is Glycine cleavage system H protein from Pectobacterium carotovorum subsp. carotovorum (strain PC1).